Reading from the N-terminus, the 471-residue chain is MKSVYHHFAIIFFLKLFLCNCILSIPKKTLGKGLFSLGLNEFKNNVDNNSLNILGELKNSKPFINKSFIQINEKKDNVLLLKLYKQNIASDKLSTYYGKIAIGENSENIFNVLFDTGSTEFWVPFKTCKFTKNNIHNKYERTQSFKYKYDDKGLPSVLEINYLSGKLVGFDGYDTVYLGPGFAIPHTNIAFATSIDIPVLEKFKWDGIIGLGFENEDSQKRGIKPFLDHLKDEKILTEKNYKNIFGYYITNTGGYITLGGIDNRFKRSPDEKIIWSPVSTEMGFWTIDILGIRKEKQPYMNERRDDEVIVKYEGFHDGSNKSIVDTGTFLIYAPKKTIENYLNDLTINSCEDKQKLPYIIFQIKSKEIESIKGLSVIELVLSPNDYVIEYIDEVNSTKECIIGIQSDEDNINGWTLGQVFLKSYYTIFDKDNLQIGFVRNKQTINDETYLNESFLRVSKKRNKKKSYNGPL.

The N-terminal stretch at 1 to 24 (MKSVYHHFAIIFFLKLFLCNCILS) is a signal peptide. Residues 96–438 (YYGKIAIGEN…DKDNLQIGFV (343 aa)) enclose the Peptidase A1 domain. Residues Asp115 and Asp325 contribute to the active site.

Belongs to the peptidase A1 family.

Its subcellular location is the cytoplasm. This is Plasmepsin VII from Plasmodium berghei (strain Anka).